The chain runs to 301 residues: Rhodopsin (301 aa).

Residues 1–18 are Extracellular-facing; it reads LHMIHLHWYQYPPMNPMM. Residues 19–43 traverse the membrane as a helical segment; sequence YPLLLIFMLFTGILCLAGNFVTIWV. Residues 44–55 are Cytoplasmic-facing; the sequence is FMNTKSLRTPAN. Residues 56–78 traverse the membrane as a helical segment; the sequence is LLVVNLAMSDFLMMFTMFPPMMV. The Extracellular segment spans residues 79-92; that stretch reads TCYYHTWTLGPTFC. A disulfide bridge links Cys-92 with Cys-169. A helical transmembrane segment spans residues 93 to 115; it reads QVYAFLGNLCGCASIWTMVFITF. A 'Ionic lock' involved in activated form stabilization motif is present at residues 116–118; sequence DRY. The Cytoplasmic segment spans residues 116–134; sequence DRYNVIVKGVAGEPLSNKK. A helical transmembrane segment spans residues 135 to 155; it reads AAMWILSVWVLSTAWCMAPFF. Residues 156–182 lie on the Extracellular side of the membrane; the sequence is GWNSYVPEGNLTGCGTDYLSEDILSRS. Asn-165 is a glycosylation site (N-linked (GlcNAc...) asparagine). The helical transmembrane segment at 183-204 threads the bilayer; sequence YLYIYSTWVYFLPLTITIYCYV. At 205 to 245 the chain is on the cytoplasmic side; it reads FIIKAVAAHEKGMRDQAKKMGIKSLRNEEAQKTSAECRLAK. Residues 246–267 traverse the membrane as a helical segment; it reads IAMTTVALWFIAWTPYLLINWV. Over 268–278 the chain is Extracellular; the sequence is GMFARSYLSPV. The helical transmembrane segment at 279–300 threads the bilayer; sequence YTIWGYVFAKANAVYNPIVYAI. At Lys-288 the chain carries N6-(retinylidene)lysine.

This sequence belongs to the G-protein coupled receptor 1 family. Opsin subfamily. In terms of assembly, homodimer. Interacts with GNAQ. In terms of processing, contains one covalently linked retinal chromophore.

Its subcellular location is the cell projection. It localises to the rhabdomere membrane. In terms of biological role, photoreceptor required for image-forming vision at low light intensity. Can use both retinal and 3-dehydroretinal as visual pigment. Light-induced isomerization of 11-cis to all-trans retinal triggers a conformational change that activates signaling via G-proteins. Signaling via GNAQ probably mediates the activation of phospholipase C. The sequence is that of Rhodopsin (RHO) from Faxonius virilis (Virile crayfish).